A 540-amino-acid polypeptide reads, in one-letter code: MTRPRPVVLIIMDGWGIAPPGPGNAADLADTPHVDAWMANCPFTTLGASGLDVGLPEGQIGNSEVGHLNIGAGFVVYQELTRISKAIADGDFFTNPVLLQAIEHVKQRNSALHLMGLFGPGGVHAHEDHLHALLELAHRHHLQRVYLHLFLDGRDVLPRSALGFLDTLEGVIARLGVGTIATVSGRYYAMDRDKRWERTGRAYAALVDGVGEKAPSARAAIEASYARDVSDEFVLPTVIVTASGEPTATVRDGDAVIFTNFRPDRGRQLTRAFVDPDLNERIRQHYERQKAEGQPLPATIWQRERQLRDLCFVTMTQYEEGLPVLVAFPPRYVTNPLAAVISQAGLRQFHIAETEKYPHVTFFLNGGREEPFPGEDRQLIPSPKVATYDLKPEMSAPEVTEALLAAIDSDQYDFIVVNYANPDMVGHTGSIPAVIKACEAVDAGLARVVPAILERGGVALVIADHGNAEQMIDPETGGPHTAHTTNPAPCFLIGGAGYGKDAIELRHGGRLADVAPTLLELLELEPSPDMTGQSLIVRRA.

Residues D13 and S63 each contribute to the Mn(2+) site. S63 (phosphoserine intermediate) is an active-site residue. Substrate-binding positions include H124, 154 to 155 (RD), R186, R192, 262 to 265 (RPDR), and K356. The Mn(2+) site is built by D423, H427, D464, H465, and H483.

The protein belongs to the BPG-independent phosphoglycerate mutase family. In terms of assembly, monomer. Mn(2+) is required as a cofactor.

It carries out the reaction (2R)-2-phosphoglycerate = (2R)-3-phosphoglycerate. It functions in the pathway carbohydrate degradation; glycolysis; pyruvate from D-glyceraldehyde 3-phosphate: step 3/5. Catalyzes the interconversion of 2-phosphoglycerate and 3-phosphoglycerate. In Chloroflexus aurantiacus (strain ATCC 29366 / DSM 635 / J-10-fl), this protein is 2,3-bisphosphoglycerate-independent phosphoglycerate mutase.